We begin with the raw amino-acid sequence, 179 residues long: Large ribosomal subunit protein uL5 (179 aa).

It belongs to the universal ribosomal protein uL5 family. In terms of assembly, part of the 50S ribosomal subunit; part of the 5S rRNA/L5/L18/L25 subcomplex. Contacts the 5S rRNA and the P site tRNA. Forms a bridge to the 30S subunit in the 70S ribosome.

This is one of the proteins that bind and probably mediate the attachment of the 5S RNA into the large ribosomal subunit, where it forms part of the central protuberance. In the 70S ribosome it contacts protein S13 of the 30S subunit (bridge B1b), connecting the 2 subunits; this bridge is implicated in subunit movement. Contacts the P site tRNA; the 5S rRNA and some of its associated proteins might help stabilize positioning of ribosome-bound tRNAs. The chain is Large ribosomal subunit protein uL5 from Dehalococcoides mccartyi (strain ATCC BAA-2266 / KCTC 15142 / 195) (Dehalococcoides ethenogenes (strain 195)).